Reading from the N-terminus, the 255-residue chain is Biotin carboxyl carrier protein of acetyl-CoA carboxylase 2, chloroplastic (255 aa).

A chloroplast-targeting transit peptide spans Met1–Ser87. Positions Pro148–Pro193 are disordered. A compositionally biased stretch (pro residues) spans Pro149 to Thr162. Over residues Ser163–Pro180 the composition is skewed to low complexity. The Biotinyl-binding domain occupies His178–Ala254. Lys220 carries the post-translational modification N6-biotinyllysine.

As to quaternary structure, acetyl-CoA carboxylase is a heterohexamer composed of biotin carboxyl carrier protein, biotin carboxylase and 2 subunits each of ACCase subunit alpha and ACCase plastid-coded subunit beta (accD). Primarily expressed in 7 to 10 days after flowering seeds at levels approximately 2-fold less abundant than BCCP1.

The protein resides in the plastid. Its subcellular location is the chloroplast. It participates in lipid metabolism; fatty acid biosynthesis. This protein is a component of the acetyl coenzyme A carboxylase complex; first, biotin carboxylase catalyzes the carboxylation of the carrier protein and then the transcarboxylase transfers the carboxyl group to form malonyl-CoA. The sequence is that of Biotin carboxyl carrier protein of acetyl-CoA carboxylase 2, chloroplastic (BCCP2) from Arabidopsis thaliana (Mouse-ear cress).